The following is a 298-amino-acid chain: Nucleotide-binding protein GTNG_3015 (298 aa).

An ATP-binding site is contributed by 17–24 (GMSGAGKT). GTP is bound at residue 68 to 71 (DLRS).

Belongs to the RapZ-like family.

In terms of biological role, displays ATPase and GTPase activities. The chain is Nucleotide-binding protein GTNG_3015 from Geobacillus thermodenitrificans (strain NG80-2).